The following is a 446-amino-acid chain: MSSSLANRNIYTVSRLNSEVRLLLENEMGIVWLVGEISNFSAPVSGHWYLTLKDSQAQVKCAMFKGNNRLVNFKPQNGQQVLVKARLSLYEPRGDYQIILESMQPEGDGRLQQQFEQLKMQLAAEGLFAQTRKKPLPENPRCVGIITSRTGAALHDILHVLKRRDPNLPVVIYPTLVQGEEAAIQIAQAIGRANTRAECDVLIVGRGGGSLEDLWCFNHEIVARTIAASEIPIISAVGHEIDVTIADFVADVRAPTPSAAAELVSRDHRHKQQALHQWQAKLASTMRHYLAQQETQFARLQHKLDKQHPQARLERQQQQLDELSLRLEQKMQQRLATQQQRWDRLSHKIELHSPIHLIRQQRFNLIQQEQRINQSIQRYLIQSRHQLALLSEKLDAVSPLATLARGYSVTRTTQGELVRQSAQVKPGDTLVTQLMDGEILSTVNSR.

This sequence belongs to the XseA family. In terms of assembly, heterooligomer composed of large and small subunits.

It is found in the cytoplasm. The enzyme catalyses Exonucleolytic cleavage in either 5'- to 3'- or 3'- to 5'-direction to yield nucleoside 5'-phosphates.. Its function is as follows. Bidirectionally degrades single-stranded DNA into large acid-insoluble oligonucleotides, which are then degraded further into small acid-soluble oligonucleotides. The protein is Exodeoxyribonuclease 7 large subunit of Vibrio cholerae serotype O1 (strain ATCC 39315 / El Tor Inaba N16961).